Here is a 254-residue protein sequence, read N- to C-terminus: Protein N-terminal and lysine N-methyltransferase EFM7 (254 aa).

S-adenosyl-L-methionine-binding positions include tryptophan 57, 84-86, aspartate 106, tryptophan 138, and serine 165; that span reads GAA.

Belongs to the class I-like SAM-binding methyltransferase superfamily. EFM7 family.

Its subcellular location is the cytoplasm. In terms of biological role, S-adenosyl-L-methionine-dependent protein methyltransferase that trimethylates the N-terminal glycine 'Gly-2' of elongation factor 1-alpha, before also catalyzing the mono- and dimethylation of 'Lys-3'. This Debaryomyces hansenii (strain ATCC 36239 / CBS 767 / BCRC 21394 / JCM 1990 / NBRC 0083 / IGC 2968) (Yeast) protein is Protein N-terminal and lysine N-methyltransferase EFM7.